Here is a 548-residue protein sequence, read N- to C-terminus: LDL receptor repeat-containing protein egg-2 (548 aa).

The Cytoplasmic segment spans residues 1-49 (MSQQAGNAQRGRFDEEPMSLGEKISHRMDQLKEIVSSSCPCAGKFPPVA). A helical; Signal-anchor for type II membrane protein membrane pass occupies residues 50-70 (IVLIVALIILGVIIAVPLVIF). The Extracellular segment spans residues 71-548 (LSPSAQAMSS…LALKNSGLRP (478 aa)). The N-linked (GlcNAc...) asparagine glycan is linked to asparagine 119. LDL-receptor class A domains lie at 122–160 (TCSG…ENCK), 161–213 (ECQS…ASCR), 215–252 (KCSK…SNCN), 253–288 (KCQK…HQCD), 291–328 (TCSG…ENCP), 370–412 (KCDP…KKCT), 416–454 (ECVV…KGCD), and 455–492 (KCPS…HKCS). Intrachain disulfides connect cysteine 130-cysteine 150, cysteine 144-cysteine 159, cysteine 162-cysteine 190, cysteine 168-cysteine 203, cysteine 197-cysteine 212, cysteine 216-cysteine 229, cysteine 223-cysteine 242, cysteine 236-cysteine 251, cysteine 254-cysteine 265, cysteine 261-cysteine 278, cysteine 272-cysteine 287, cysteine 292-cysteine 305, cysteine 300-cysteine 318, cysteine 312-cysteine 327, cysteine 371-cysteine 389, cysteine 379-cysteine 402, cysteine 396-cysteine 411, cysteine 417-cysteine 431, cysteine 427-cysteine 444, cysteine 438-cysteine 453, cysteine 456-cysteine 469, cysteine 463-cysteine 482, and cysteine 476-cysteine 491. Asparagine 244 carries N-linked (GlcNAc...) asparagine glycosylation. N-linked (GlcNAc...) asparagine glycosylation occurs at asparagine 527.

The protein resides in the cell membrane. Its subcellular location is the endosome membrane. Probable receptor which is required for the oocyte-to-zygote transition although its exact function is controversial. Redundantly with egg-1, seems to be required for fertilization probably by promoting the interaction or fusion between sperm and oocyte. Conversely, shown to be dispensable for fertilization but required together with egg-1 for the formation of a continuous and cohesive eggshell chitin layer by maintaining a homogenous distribution of chitin synthase chs-1 at the unfertilized oocyte cell membrane. Appears to recruit or maintain together to the unfertilized oocyte cortex several proteins including chs-1, kinase mbk-2 and pseudophosphatase egg-3, and possibly egg-4 and egg-5. The protein is LDL receptor repeat-containing protein egg-2 of Caenorhabditis elegans.